Here is a 449-residue protein sequence, read N- to C-terminus: UDP-N-acetylmuramoylalanine--D-glutamate ligase (449 aa).

ATP is bound at residue 118 to 124; that stretch reads GTNGKTT.

This sequence belongs to the MurCDEF family.

It is found in the cytoplasm. It catalyses the reaction UDP-N-acetyl-alpha-D-muramoyl-L-alanine + D-glutamate + ATP = UDP-N-acetyl-alpha-D-muramoyl-L-alanyl-D-glutamate + ADP + phosphate + H(+). The protein operates within cell wall biogenesis; peptidoglycan biosynthesis. Functionally, cell wall formation. Catalyzes the addition of glutamate to the nucleotide precursor UDP-N-acetylmuramoyl-L-alanine (UMA). This Staphylococcus aureus (strain Mu3 / ATCC 700698) protein is UDP-N-acetylmuramoylalanine--D-glutamate ligase.